We begin with the raw amino-acid sequence, 358 residues long: Glyoxylate/succinic semialdehyde reductase 2, chloroplastic (358 aa).

The N-terminal 44 residues, 1-44 (MPLVSLSFASSSSKAMALCSICPRIPLRFRPKPISPFLSKPQIC), are a transit peptide targeting the chloroplast. NADP(+)-binding positions include 70–84 (GFLGMGIMGSPMAQN) and T161. K236 is an active-site residue. Residue K304 coordinates NADP(+).

This sequence belongs to the HIBADH-related family. NP60 subfamily.

The protein localises to the plastid. It is found in the chloroplast stroma. The enzyme catalyses glycolate + NADP(+) = glyoxylate + NADPH + H(+). It catalyses the reaction 4-hydroxybutanoate + NADP(+) = succinate semialdehyde + NADPH + H(+). With respect to regulation, the ratio of NADPH/NADP(+) may regulate enzymatic activity. In terms of biological role, catalyzes the NADPH-dependent reduction of glyoxylate to glycolate as well as succinic semialdehyde (SSA) to gamma-hydroxybutyrate in vitro. May function in redox homeostasis and play a role in oxidative stress tolerance by detoxifying glyoxylate and SSA generated in glycolate metabolism and GABA metabolism, respectively. The polypeptide is Glyoxylate/succinic semialdehyde reductase 2, chloroplastic (GLYR2) (Arabidopsis thaliana (Mouse-ear cress)).